The primary structure comprises 239 residues: MGTPYYKRVLLKLSGEALAGDQGYGIDPLTITTIAAEIKEVVASGAQLALVIGGGNIFRGLAASSKGMDRASADYMGMLATMINSLAMQDALEKIGVDTRVQSAIAMQEVAEPYIRRRAMRHLEKGRVVIFGAGTGNPYFTTDTAASLRAMEIGADVILKGTKVDGVYSADPKKDPTAQKYPRLTYLEVLKKGLQVMDATATSLCMDNNLPIIVFDITTYGNIKKVVCGEEIGTVVKGE.

An ATP-binding site is contributed by 12 to 15; that stretch reads KLSG. An involved in allosteric activation by GTP region spans residues 20–25; sequence GDQGYG. Residue glycine 54 participates in UMP binding. 2 residues coordinate ATP: glycine 55 and arginine 59. UMP-binding positions include aspartate 74 and 135–142; that span reads TGNPYFTT. 3 residues coordinate ATP: threonine 162, tyrosine 168, and aspartate 171.

The protein belongs to the UMP kinase family. Homohexamer.

It localises to the cytoplasm. It carries out the reaction UMP + ATP = UDP + ADP. It functions in the pathway pyrimidine metabolism; CTP biosynthesis via de novo pathway; UDP from UMP (UMPK route): step 1/1. Allosterically activated by GTP. Inhibited by UTP. Catalyzes the reversible phosphorylation of UMP to UDP. This chain is Uridylate kinase, found in Geobacter metallireducens (strain ATCC 53774 / DSM 7210 / GS-15).